The chain runs to 248 residues: Putative eukaryotic initiation factor 4A-like protein (248 aa).

The short motif at 14–42 (VGFASLGLNEQLINNIKRYGITKLTPFQM) is the Q motif element. Residues 45 to 239 (IKEIKENSNV…NTFIKIPKII (195 aa)) form the Helicase ATP-binding domain. 58–65 (SIEGTGRT) is an ATP binding site. A DEAD box motif is present at residues 185–188 (DELD).

The protein belongs to the DEAD box helicase family. eIF4A subfamily.

The protein is Putative eukaryotic initiation factor 4A-like protein of Dictyostelium discoideum (Social amoeba).